A 379-amino-acid chain; its full sequence is Anhydro-N-acetylmuramic acid kinase (379 aa).

9–16 (GTSADGVD) lines the ATP pocket.

It belongs to the anhydro-N-acetylmuramic acid kinase family.

The catalysed reaction is 1,6-anhydro-N-acetyl-beta-muramate + ATP + H2O = N-acetyl-D-muramate 6-phosphate + ADP + H(+). Its pathway is amino-sugar metabolism; 1,6-anhydro-N-acetylmuramate degradation. The protein operates within cell wall biogenesis; peptidoglycan recycling. Catalyzes the specific phosphorylation of 1,6-anhydro-N-acetylmuramic acid (anhMurNAc) with the simultaneous cleavage of the 1,6-anhydro ring, generating MurNAc-6-P. Is required for the utilization of anhMurNAc either imported from the medium or derived from its own cell wall murein, and thus plays a role in cell wall recycling. The polypeptide is Anhydro-N-acetylmuramic acid kinase (Prochlorococcus marinus (strain MIT 9211)).